Consider the following 341-residue polypeptide: L-threonine 3-dehydrogenase (341 aa).

Cys-38 provides a ligand contact to Zn(2+). Active-site charge relay system residues include Thr-40 and His-43. Zn(2+) contacts are provided by His-63, Glu-64, Cys-93, Cys-96, Cys-99, and Cys-107. Residues Ile-175, Asp-195, Arg-200, 262 to 264 (LGI), and 286 to 287 (IY) each bind NAD(+).

The protein belongs to the zinc-containing alcohol dehydrogenase family. As to quaternary structure, homotetramer. It depends on Zn(2+) as a cofactor.

Its subcellular location is the cytoplasm. The enzyme catalyses L-threonine + NAD(+) = (2S)-2-amino-3-oxobutanoate + NADH + H(+). It participates in amino-acid degradation; L-threonine degradation via oxydo-reductase pathway; glycine from L-threonine: step 1/2. Functionally, catalyzes the NAD(+)-dependent oxidation of L-threonine to 2-amino-3-ketobutyrate. The chain is L-threonine 3-dehydrogenase from Escherichia coli O157:H7.